The primary structure comprises 194 residues: Imidazoleglycerol-phosphate dehydratase (194 aa).

The protein belongs to the imidazoleglycerol-phosphate dehydratase family.

Its subcellular location is the cytoplasm. It carries out the reaction D-erythro-1-(imidazol-4-yl)glycerol 3-phosphate = 3-(imidazol-4-yl)-2-oxopropyl phosphate + H2O. Its pathway is amino-acid biosynthesis; L-histidine biosynthesis; L-histidine from 5-phospho-alpha-D-ribose 1-diphosphate: step 6/9. The chain is Imidazoleglycerol-phosphate dehydratase from Methanothermobacter thermautotrophicus (strain ATCC 29096 / DSM 1053 / JCM 10044 / NBRC 100330 / Delta H) (Methanobacterium thermoautotrophicum).